A 137-amino-acid polypeptide reads, in one-letter code: MKQRTLSIIKPDALKKKVVGKIIDRFESNGLEVIAMKRLHLSVKDAENFYAIHRERPFFKDLIEFMVSGPVVVMVLEGKDAVAKNRDLMGATDPKLAQKGTIRADFAESIDANAVHGSDSLENARNEIAFFFAARDL.

ATP contacts are provided by lysine 10, phenylalanine 58, arginine 86, threonine 92, arginine 103, and asparagine 113. The Pros-phosphohistidine intermediate role is filled by histidine 116.

This sequence belongs to the NDK family. In terms of assembly, homotetramer. It depends on Mg(2+) as a cofactor.

It localises to the cytoplasm. The catalysed reaction is a 2'-deoxyribonucleoside 5'-diphosphate + ATP = a 2'-deoxyribonucleoside 5'-triphosphate + ADP. The enzyme catalyses a ribonucleoside 5'-diphosphate + ATP = a ribonucleoside 5'-triphosphate + ADP. Functionally, major role in the synthesis of nucleoside triphosphates other than ATP. The ATP gamma phosphate is transferred to the NDP beta phosphate via a ping-pong mechanism, using a phosphorylated active-site intermediate. In Helicobacter pylori (strain Shi470), this protein is Nucleoside diphosphate kinase.